The sequence spans 239 residues: Dephospho-CoA kinase (239 aa).

A DPCK domain is found at 3 to 206 (IIGLTGSIAS…GGEGGEPAAG (204 aa)). 11–16 (ASGKST) contributes to the ATP binding site. The tract at residues 197-239 (GGEGGEPAAGSSAHHGAGSVDPGAGPCDGPGAAPEAERRGGDR) is disordered. Positions 204-230 (AAGSSAHHGAGSVDPGAGPCDGPGAAP) are enriched in low complexity.

The protein belongs to the CoaE family.

It localises to the cytoplasm. It carries out the reaction 3'-dephospho-CoA + ATP = ADP + CoA + H(+). It participates in cofactor biosynthesis; coenzyme A biosynthesis; CoA from (R)-pantothenate: step 5/5. Catalyzes the phosphorylation of the 3'-hydroxyl group of dephosphocoenzyme A to form coenzyme A. This is Dephospho-CoA kinase from Symbiobacterium thermophilum (strain DSM 24528 / JCM 14929 / IAM 14863 / T).